A 123-amino-acid chain; its full sequence is Large ribosomal subunit protein bL12 (123 aa).

It belongs to the bacterial ribosomal protein bL12 family. As to quaternary structure, homodimer. Part of the ribosomal stalk of the 50S ribosomal subunit. Forms a multimeric L10(L12)X complex, where L10 forms an elongated spine to which 2 to 4 L12 dimers bind in a sequential fashion. Binds GTP-bound translation factors.

Forms part of the ribosomal stalk which helps the ribosome interact with GTP-bound translation factors. Is thus essential for accurate translation. This Ectopseudomonas mendocina (strain ymp) (Pseudomonas mendocina) protein is Large ribosomal subunit protein bL12.